We begin with the raw amino-acid sequence, 508 residues long: MRCPKSAVTMRNEELLLSNGTANKMNGALDHSDQPDPDAIKMFVGQIPRSWSEKELKELFEPYGAVYQINVLRDRSQNPPQSKGCCFVTFYTRKAALEAQNALHNIKTLPGMHHPIQMKPADSEKSNAVEDRKLFIGMVSKKCNENDIRVMFSPFGQIEECRILRGPDGLSRGCAFVTFSTRAMAQNAIKAMHQSQTMEGCSSPIVVKFADTQKDKEQRRLQQQLAQQMQQLNTATWGNLTGLGGLTPQYLALLQQATSSSNLGAFSGIQQMAGMNALQLQNLATLAAAAAAAQTSATSTNANPLSTTSSALGALTSPVAASTPNSTAGAAMNSLTSLGTLQGLAGATVGLNNINALAGMAALNGGLGATGLTNGTAGTMDALTQAYSGIQQYAAAALPTLYSQSLLQQQSAAGSQKEGPEGANLFIYHLPQEFGDQDILQMFMPFGNVISAKVFIDKQTNLSKCFGFVSYDNPVSAQAAIQAMNGFQIGMKRLKVQLKRSKNDSKPY.

Necessary for RNA-binding, TNNT2 exon 5 and NMDA R1 exon 21 inclusion regions lie at residues 1 to 283 (MRCP…LQNL) and 357 to 508 (LAGM…SKPY). 3 RRM domains span residues 40 to 123 (IKMF…PADS), 132 to 212 (RKLF…FADT), and 423 to 501 (ANLF…LKRS).

It belongs to the CELF/BRUNOL family. In terms of assembly, interacts with A1CF. In terms of tissue distribution, expressed in frontal cortex. Isoform 1 is expressed in brain and lung. Isoform 2 is expressed in heart, brain, placenta, lung, liver, kidney, skeletal muscle and pancreas. Isoform 4 is expressed in heart, lung, skeletal muscle, kidney and pancreas.

The protein resides in the nucleus. It localises to the cytoplasm. RNA-binding protein implicated in the regulation of several post-transcriptional events. Involved in pre-mRNA alternative splicing, mRNA translation and stability. Mediates exon inclusion and/or exclusion in pre-mRNA that are subject to tissue-specific and developmentally regulated alternative splicing. Specifically activates exon 5 inclusion of TNNT2 in embryonic, but not adult, skeletal muscle. Activates TNNT2 exon 5 inclusion by antagonizing the repressive effect of PTB. Acts both as an activator and as a repressor of a pair of coregulated exons: promotes inclusion of the smooth muscle (SM) exon but exclusion of the non-muscle (NM) exon in actinin pre-mRNAs. Promotes inclusion of exonS 21 and exclusion of exon 5 of the NMDA receptor R1 pre-mRNA. Involved in the apoB RNA editing activity. Increases COX2 mRNA stability and inhibits COX2 mRNA translation in epithelial cells after radiation injury. Modulates the cellular apoptosis program by regulating COX2-mediated prostaglandin E2 (PGE2) expression. Binds to (CUG)n triplet repeats in the 3'-UTR of transcripts such as DMPK. Binds to the muscle-specific splicing enhancer (MSE) intronic sites flanking the TNNT2 alternative exon 5. Binds preferentially to UG-rich sequences, in particular UG repeat and UGUU motifs. Binds to apoB mRNA, specifically to AU-rich sequences located immediately upstream of the edited cytidine. Binds AU-rich sequences in the 3'-UTR of COX2 mRNA. Binds to an intronic RNA element responsible for the silencing of exon 21 splicing. Binds to (CUG)n repeats. May be a specific regulator of miRNA biogenesis. Binds to primary microRNA pri-MIR140 and, with CELF1, negatively regulates the processing to mature miRNA. The chain is CUGBP Elav-like family member 2 (CELF2) from Homo sapiens (Human).